The sequence spans 857 residues: Median body protein (857 aa).

2 coiled-coil regions span residues 169-546 (HNAL…MRTE) and 571-793 (LAHL…TKAM).

The protein localises to the cytoplasm. It is found in the cytoskeleton. In terms of biological role, structural component of the ventral disk involved in maintanance of a domed conformation of the disk required for proper attachment. May have a role in immobilizing the microtubules between cell divisions. The sequence is that of Median body protein from Giardia intestinalis (strain ATCC 50803 / WB clone C6) (Giardia lamblia).